The sequence spans 234 residues: MNNQLIYTGKAKDIYSTKDENVIRTVYKDQATMLNGARKETIDGKGALNNQISSLIFEKLNMAGVVTHYIEQISKNEQLNKKVDIIPLEVVLRNVTAGSFSKRFGVEEGRVLETPIVEFYYKNDDLNDPFINDEHMKFLGIVNDEEIAYLKGETRRINELLKDWFAQIGLNLIDFKLEFGFDKDGKIILADEFSPDNCRLWDAEGNHMDKDVFRRDLGSLTDVYQVVLEKLIAL.

Belongs to the SAICAR synthetase family.

It carries out the reaction 5-amino-1-(5-phospho-D-ribosyl)imidazole-4-carboxylate + L-aspartate + ATP = (2S)-2-[5-amino-1-(5-phospho-beta-D-ribosyl)imidazole-4-carboxamido]succinate + ADP + phosphate + 2 H(+). It functions in the pathway purine metabolism; IMP biosynthesis via de novo pathway; 5-amino-1-(5-phospho-D-ribosyl)imidazole-4-carboxamide from 5-amino-1-(5-phospho-D-ribosyl)imidazole-4-carboxylate: step 1/2. This Streptococcus agalactiae serotype III (strain NEM316) protein is Phosphoribosylaminoimidazole-succinocarboxamide synthase.